The following is a 143-amino-acid chain: Transcription antitermination protein NusB (143 aa).

The protein belongs to the NusB family.

Involved in transcription antitermination. Required for transcription of ribosomal RNA (rRNA) genes. Binds specifically to the boxA antiterminator sequence of the ribosomal RNA (rrn) operons. The chain is Transcription antitermination protein NusB from Clostridium botulinum (strain ATCC 19397 / Type A).